The primary structure comprises 122 residues: MSITNEQILDAVAEMSVMQVVELIEAMEEKFGVTAAAAVVAGGAAGGEAAAEQTEFDVILESAGGNKVAVIKAVRGATGLGLKEAKALVDGAPAPLKEGVDKAEADALKAQLEEAGATVAVK.

The protein belongs to the bacterial ribosomal protein bL12 family. In terms of assembly, homodimer. Part of the ribosomal stalk of the 50S ribosomal subunit. Forms a multimeric L10(L12)X complex, where L10 forms an elongated spine to which 2 to 4 L12 dimers bind in a sequential fashion. Binds GTP-bound translation factors.

In terms of biological role, forms part of the ribosomal stalk which helps the ribosome interact with GTP-bound translation factors. Is thus essential for accurate translation. The polypeptide is Large ribosomal subunit protein bL12 (Vibrio campbellii (strain ATCC BAA-1116)).